Here is a 482-residue protein sequence, read N- to C-terminus: Bifunctional protein GlmU (482 aa).

Positions 1–238 (MSATSPAAVV…HREILGINNR (238 aa)) are pyrophosphorylase. Residues 12 to 15 (LAAG), lysine 26, glutamine 79, and 84 to 85 (GT) each bind UDP-N-acetyl-alpha-D-glucosamine. Aspartate 110 contacts Mg(2+). Residues glycine 147, glutamate 163, asparagine 178, and asparagine 236 each contribute to the UDP-N-acetyl-alpha-D-glucosamine site. A Mg(2+)-binding site is contributed by asparagine 236. The segment at 239–259 (LQLAEARRLLNERLLERAMLA) is linker. The tract at residues 260–482 (GVTVVDPAST…ASSQETDGQS (223 aa)) is N-acetyltransferase. 2 residues coordinate UDP-N-acetyl-alpha-D-glucosamine: arginine 341 and lysine 359. Histidine 371 acts as the Proton acceptor in catalysis. UDP-N-acetyl-alpha-D-glucosamine-binding residues include tyrosine 374 and asparagine 385. Acetyl-CoA-binding positions include alanine 388, 394–395 (NY), serine 413, alanine 431, and arginine 448. The segment at 458–482 (VARKRPGSAAAQAAQASSQETDGQS) is disordered. Over residues 465–476 (SAAAQAAQASSQ) the composition is skewed to low complexity.

This sequence in the N-terminal section; belongs to the N-acetylglucosamine-1-phosphate uridyltransferase family. It in the C-terminal section; belongs to the transferase hexapeptide repeat family. In terms of assembly, homotrimer. Mg(2+) is required as a cofactor.

It is found in the cytoplasm. It carries out the reaction alpha-D-glucosamine 1-phosphate + acetyl-CoA = N-acetyl-alpha-D-glucosamine 1-phosphate + CoA + H(+). The catalysed reaction is N-acetyl-alpha-D-glucosamine 1-phosphate + UTP + H(+) = UDP-N-acetyl-alpha-D-glucosamine + diphosphate. It participates in nucleotide-sugar biosynthesis; UDP-N-acetyl-alpha-D-glucosamine biosynthesis; N-acetyl-alpha-D-glucosamine 1-phosphate from alpha-D-glucosamine 6-phosphate (route II): step 2/2. It functions in the pathway nucleotide-sugar biosynthesis; UDP-N-acetyl-alpha-D-glucosamine biosynthesis; UDP-N-acetyl-alpha-D-glucosamine from N-acetyl-alpha-D-glucosamine 1-phosphate: step 1/1. Its pathway is bacterial outer membrane biogenesis; LPS lipid A biosynthesis. In terms of biological role, catalyzes the last two sequential reactions in the de novo biosynthetic pathway for UDP-N-acetylglucosamine (UDP-GlcNAc). The C-terminal domain catalyzes the transfer of acetyl group from acetyl coenzyme A to glucosamine-1-phosphate (GlcN-1-P) to produce N-acetylglucosamine-1-phosphate (GlcNAc-1-P), which is converted into UDP-GlcNAc by the transfer of uridine 5-monophosphate (from uridine 5-triphosphate), a reaction catalyzed by the N-terminal domain. In Streptomyces griseus subsp. griseus (strain JCM 4626 / CBS 651.72 / NBRC 13350 / KCC S-0626 / ISP 5235), this protein is Bifunctional protein GlmU.